The sequence spans 393 residues: Elongation factor Tu (393 aa).

The tr-type G domain maps to 10–203 (KPHVNIGTIG…AVDEFIPEPV (194 aa)). The tract at residues 19–26 (GHVDHGKT) is G1. Residue 19 to 26 (GHVDHGKT) coordinates GTP. Thr-26 provides a ligand contact to Mg(2+). The G2 stretch occupies residues 60–64 (GITIS). The interval 81-84 (DCPG) is G3. Residues 81–85 (DCPGH) and 136–139 (NKVD) contribute to the GTP site. Residues 136-139 (NKVD) form a G4 region. The tract at residues 173 to 175 (SAL) is G5.

This sequence belongs to the TRAFAC class translation factor GTPase superfamily. Classic translation factor GTPase family. EF-Tu/EF-1A subfamily. In terms of assembly, monomer.

It is found in the cytoplasm. The enzyme catalyses GTP + H2O = GDP + phosphate + H(+). GTP hydrolase that promotes the GTP-dependent binding of aminoacyl-tRNA to the A-site of ribosomes during protein biosynthesis. The chain is Elongation factor Tu from Chlorobium limicola (strain DSM 245 / NBRC 103803 / 6330).